Reading from the N-terminus, the 309-residue chain is HPr kinase/phosphorylase (309 aa).

Catalysis depends on residues His-138 and Lys-159. 153–160 (GQSGVGKS) contacts ATP. Ser-160 serves as a coordination point for Mg(2+). Asp-177 acts as the Proton acceptor; for phosphorylation activity. Proton donor; for dephosphorylation activity in catalysis. Residues 201-210 (LEIRGLGIIN) form an important for the catalytic mechanism of both phosphorylation and dephosphorylation region. Glu-202 contributes to the Mg(2+) binding site. Residue Arg-243 is part of the active site. The important for the catalytic mechanism of dephosphorylation stretch occupies residues 264-269 (PVRPGR).

Belongs to the HPrK/P family. As to quaternary structure, homohexamer. The cofactor is Mg(2+).

The enzyme catalyses [HPr protein]-L-serine + ATP = [HPr protein]-O-phospho-L-serine + ADP + H(+). It catalyses the reaction [HPr protein]-O-phospho-L-serine + phosphate + H(+) = [HPr protein]-L-serine + diphosphate. In terms of biological role, catalyzes the ATP- as well as the pyrophosphate-dependent phosphorylation of a specific serine residue in HPr, a phosphocarrier protein of the phosphoenolpyruvate-dependent sugar phosphotransferase system (PTS). HprK/P also catalyzes the pyrophosphate-producing, inorganic phosphate-dependent dephosphorylation (phosphorolysis) of seryl-phosphorylated HPr (P-Ser-HPr). The two antagonistic activities of HprK/P are regulated by several intracellular metabolites, which change their concentration in response to the absence or presence of rapidly metabolisable carbon sources (glucose, fructose, etc.) in the growth medium. Also phosphorylates/dephosphorylates the HPr-like catabolite repression protein crh on a specific serine residue. Therefore, by controlling the phosphorylation state of HPr and crh, HPrK/P is a sensor enzyme that plays a major role in the regulation of carbon metabolism and sugar transport: it mediates carbon catabolite repression (CCR), and regulates PTS-catalyzed carbohydrate uptake and inducer exclusion. The chain is HPr kinase/phosphorylase from Bacillus cereus (strain AH820).